Consider the following 405-residue polypeptide: Acetate kinase (405 aa).

Asn-7 serves as a coordination point for Mg(2+). Lys-14 is an ATP binding site. Arg-98 provides a ligand contact to substrate. The Proton donor/acceptor role is filled by Asp-156. ATP is bound by residues 215 to 219 (HLGNG), 290 to 292 (DLR), and 338 to 342 (GVGEN). Glu-391 serves as a coordination point for Mg(2+).

Belongs to the acetokinase family. As to quaternary structure, homodimer. Mg(2+) is required as a cofactor. It depends on Mn(2+) as a cofactor.

The protein resides in the cytoplasm. It carries out the reaction acetate + ATP = acetyl phosphate + ADP. Its pathway is metabolic intermediate biosynthesis; acetyl-CoA biosynthesis; acetyl-CoA from acetate: step 1/2. Catalyzes the formation of acetyl phosphate from acetate and ATP. Can also catalyze the reverse reaction. This Gloeobacter violaceus (strain ATCC 29082 / PCC 7421) protein is Acetate kinase.